The primary structure comprises 343 residues: Anthranilate phosphoribosyltransferase (343 aa).

5-phospho-alpha-D-ribose 1-diphosphate is bound by residues glycine 81, 84–85, 91–94, 109–117, and serine 121; these read GD, NVST, and KHGNRSVSS. Glycine 81 is a binding site for anthranilate. Serine 93 is a Mg(2+) binding site. Asparagine 112 lines the anthranilate pocket. Residue arginine 167 coordinates anthranilate. Positions 226 and 227 each coordinate Mg(2+).

Belongs to the anthranilate phosphoribosyltransferase family. Homodimer. Mg(2+) is required as a cofactor.

The enzyme catalyses N-(5-phospho-beta-D-ribosyl)anthranilate + diphosphate = 5-phospho-alpha-D-ribose 1-diphosphate + anthranilate. Its pathway is amino-acid biosynthesis; L-tryptophan biosynthesis; L-tryptophan from chorismate: step 2/5. Functionally, catalyzes the transfer of the phosphoribosyl group of 5-phosphorylribose-1-pyrophosphate (PRPP) to anthranilate to yield N-(5'-phosphoribosyl)-anthranilate (PRA). This is Anthranilate phosphoribosyltransferase from Chromohalobacter salexigens (strain ATCC BAA-138 / DSM 3043 / CIP 106854 / NCIMB 13768 / 1H11).